Reading from the N-terminus, the 393-residue chain is Sialyltransferase-like protein 1 (393 aa).

At 1-8 the chain is on the cytoplasmic side; the sequence is MKRPLRRP. The chain crosses the membrane as a helical; Signal-anchor for type II membrane protein span at residues 9-27; that stretch reads FAVLLFVVLCAAASFPSVL. Topologically, residues 28 to 393 are lumenal; sequence RRSVGPAPVL…IAVPPVVFYH (366 aa). N-linked (GlcNAc...) asparagine glycosylation is found at Asn49, Asn212, and Asn258.

This sequence belongs to the glycosyltransferase 29 family.

The protein resides in the golgi apparatus membrane. Functionally, possesses sialyltransferase-like activity in vitro. Transfers sialic acid to the oligosaccharide Gal-beta-1,3-GalNAc and to glycoproteins such as asialofetuin, alpha-1-acid glycoprotein (NeuAc-alpha-2,3-Gal-beta-1,3-GalNAc-) and andasialo-alpha-1-acid glycoprotein. The transferred sialic acid is linked to galactose of Gal-beta-1,3-GalNAc through alpha-2,6-linkage. The chain is Sialyltransferase-like protein 1 from Oryza sativa subsp. indica (Rice).